A 173-amino-acid polypeptide reads, in one-letter code: CKLF-like MARVEL transmembrane domain-containing protein 8 (173 aa).

One can recognise an MARVEL domain in the interval 36–168; the sequence is FLRTLPGLLI…NTYFSFIAWR (133 aa). Helical transmembrane passes span 40–60, 70–90, 105–125, and 147–167; these read LPGL…TLIA, FGWV…FLII, TTVG…AAIV, and FFAF…FIAW.

Belongs to the chemokine-like factor family.

The protein resides in the membrane. The chain is CKLF-like MARVEL transmembrane domain-containing protein 8 (CMTM8) from Bos taurus (Bovine).